A 297-amino-acid chain; its full sequence is Homoserine kinase (297 aa).

84–94 (PLSKGFGSSAA) lines the ATP pocket.

The protein belongs to the GHMP kinase family. Homoserine kinase subfamily.

Its subcellular location is the cytoplasm. It carries out the reaction L-homoserine + ATP = O-phospho-L-homoserine + ADP + H(+). It participates in amino-acid biosynthesis; L-threonine biosynthesis; L-threonine from L-aspartate: step 4/5. Catalyzes the ATP-dependent phosphorylation of L-homoserine to L-homoserine phosphate. This is Homoserine kinase from Shouchella clausii (strain KSM-K16) (Alkalihalobacillus clausii).